The following is a 698-amino-acid chain: Protein let-99 (698 aa).

A DEP domain is found at 23 to 107 (FRSNLSLKTN…SESRIYLFMK (85 aa)). 2 disordered regions span residues 115–188 (PKPR…DDEI) and 653–672 (ITRSRNDWQPPVPDKPQASP). The span at 146–157 (RPPKARLPRRLS) shows a compositional bias: basic residues. Basic and acidic residues predominate over residues 178 to 188 (HGFDDHKDDEI).

Its subcellular location is the cytoplasm. The protein resides in the cell cortex. Its function is as follows. Required for the proper orientation of spindles after the establishment of polarity. May play a role in interactions between the astral microtubules and the cortical cytoskeleton. Required for asymmetric forces on nuclei and spindles. Acts downstream of the PAR signaling as an intermediate that transduces polarity information to the machinery that positions the mitotic spindle, possibly by regulating force generation. Regulates gpr-1/2 asymmetric cortical localization during the first embryonic cell divisions. Acts antagonistically to the gpr-1/2 signaling pathway. Regulates mes-1 expression and/or localization pattern during early embryogenesis. The protein is Protein let-99 (let-99) of Caenorhabditis elegans.